The sequence spans 78 residues: MDQHNNGVSTLVAGQFALPSHATFGLGDRVRKKSGAAWQGQVVGWYCTKLTPEGYAVESESHPGSVQIYPVAALERVA.

Residues lysine 32 and 66–69 (VQIY) contribute to the NADP(+) site. Residue isoleucine 68 participates in substrate binding.

In terms of assembly, homotetramer.

It carries out the reaction (6S)-5,6,7,8-tetrahydrofolate + NADP(+) = 7,8-dihydrofolate + NADPH + H(+). It participates in cofactor biosynthesis; tetrahydrofolate biosynthesis; 5,6,7,8-tetrahydrofolate from 7,8-dihydrofolate: step 1/1. Functionally, key enzyme in folate metabolism. Catalyzes an essential reaction for de novo glycine and purine synthesis, and for DNA precursor synthesis. This chain is Dihydrofolate reductase type 2, found in Escherichia coli.